The chain runs to 97 residues: Citrate lyase acyl carrier protein (97 aa).

Ser14 is modified (O-(phosphoribosyl dephospho-coenzyme A)serine).

The protein belongs to the CitD family. In terms of assembly, oligomer with a subunit composition of (alpha,beta,gamma)6.

Its subcellular location is the cytoplasm. In terms of biological role, covalent carrier of the coenzyme of citrate lyase. This chain is Citrate lyase acyl carrier protein, found in Yersinia enterocolitica serotype O:8 / biotype 1B (strain NCTC 13174 / 8081).